The following is a 515-amino-acid chain: RNA-splicing ligase RtcB homolog (515 aa).

5 residues coordinate Mn(2+): Asp129, Cys132, His237, His269, and His363. 236–240 is a binding site for GMP; it reads NHYAE. Residues 363-364, 412-415, Ser419, 438-441, and Lys514 each bind GMP; these read HN, GGTM, and HGAG. His438 functions as the GMP-histidine intermediate in the catalytic mechanism.

The protein belongs to the RtcB family. As to quaternary structure, catalytic component of the tRNA-splicing ligase complex. The cofactor is Mn(2+).

The catalysed reaction is a 3'-end 3'-phospho-ribonucleotide-RNA + a 5'-end dephospho-ribonucleoside-RNA + GTP = a ribonucleotidyl-ribonucleotide-RNA + GMP + diphosphate. It catalyses the reaction a 3'-end 2',3'-cyclophospho-ribonucleotide-RNA + a 5'-end dephospho-ribonucleoside-RNA + GTP + H2O = a ribonucleotidyl-ribonucleotide-RNA + GMP + diphosphate + H(+). In terms of biological role, catalytic subunit of the tRNA-splicing ligase complex that acts by directly joining spliced tRNA halves to mature-sized tRNAs by incorporating the precursor-derived splice junction phosphate into the mature tRNA as a canonical 3',5'-phosphodiester. May act as an RNA ligase with broad substrate specificity, and may function toward other RNAs. In Ostreococcus tauri, this protein is RNA-splicing ligase RtcB homolog.